The following is a 97-amino-acid chain: Defensin-like protein 301 (97 aa).

Positions 1–24 (MEKVTSIFFVLLLISSCLILRSQG) are cleaved as a signal peptide. Intrachain disulfides connect Cys-28/Cys-47, Cys-34/Cys-53, Cys-39/Cys-55, Cys-65/Cys-84, Cys-71/Cys-92, and Cys-76/Cys-94.

The protein belongs to the DEFL family.

It is found in the secreted. This is Defensin-like protein 301 from Arabidopsis thaliana (Mouse-ear cress).